Consider the following 214-residue polypeptide: Molybdenum cofactor guanylyltransferase (214 aa).

GTP-binding positions include 18 to 20 (LAG), Lys31, Asp77, and Asp112. Asp112 serves as a coordination point for Mg(2+).

The protein belongs to the MobA family. In terms of assembly, monomer. It depends on Mg(2+) as a cofactor.

The protein resides in the cytoplasm. The enzyme catalyses Mo-molybdopterin + GTP + H(+) = Mo-molybdopterin guanine dinucleotide + diphosphate. Functionally, transfers a GMP moiety from GTP to Mo-molybdopterin (Mo-MPT) cofactor (Moco or molybdenum cofactor) to form Mo-molybdopterin guanine dinucleotide (Mo-MGD) cofactor. The protein is Molybdenum cofactor guanylyltransferase of Rhodopseudomonas palustris (strain HaA2).